Consider the following 96-residue polypeptide: UPF0235 protein YggU (96 aa).

Belongs to the UPF0235 family.

In Escherichia coli O157:H7, this protein is UPF0235 protein YggU.